Here is a 403-residue protein sequence, read N- to C-terminus: Serine/threonine transporter SstT (403 aa).

A run of 10 helical transmembrane segments spans residues 15–35 (LGLIPQIVIGIALGVGVAIVW), 49–69 (FISALKAVAPILVFLLVMTAI), 85–105 (LLYVVGTLCAALVAVLASFIF), 142–162 (ALLNANFVGILAWAMGLGMML), 183–203 (IVQLVIRCAPLGIFGLVAGTL), 218–238 (LAVIVGCMLFVALVTNPLIVF), 246–268 (YPLVFACLRGSAITAFFTRSSAA), 289–309 (ISIPLGATINMAGAAVTISVI), 317–337 (LGIGVDFATALLLCVVASLAA), and 362–382 (PDVAMQVVAIGFVISVVQDAT).

This sequence belongs to the dicarboxylate/amino acid:cation symporter (DAACS) (TC 2.A.23) family.

Its subcellular location is the cell inner membrane. The catalysed reaction is L-serine(in) + Na(+)(in) = L-serine(out) + Na(+)(out). The enzyme catalyses L-threonine(in) + Na(+)(in) = L-threonine(out) + Na(+)(out). Its function is as follows. Involved in the import of serine and threonine into the cell, with the concomitant import of sodium (symport system). This Chromohalobacter salexigens (strain ATCC BAA-138 / DSM 3043 / CIP 106854 / NCIMB 13768 / 1H11) protein is Serine/threonine transporter SstT.